The following is a 504-amino-acid chain: ATP synthase subunit alpha (504 aa).

169–176 (GDRQTGKT) serves as a coordination point for ATP.

Belongs to the ATPase alpha/beta chains family. In terms of assembly, F-type ATPases have 2 components, CF(1) - the catalytic core - and CF(0) - the membrane proton channel. CF(1) has five subunits: alpha(3), beta(3), gamma(1), delta(1), epsilon(1). CF(0) has three main subunits: a(1), b(2) and c(9-12). The alpha and beta chains form an alternating ring which encloses part of the gamma chain. CF(1) is attached to CF(0) by a central stalk formed by the gamma and epsilon chains, while a peripheral stalk is formed by the delta and b chains.

The protein resides in the cell membrane. It catalyses the reaction ATP + H2O + 4 H(+)(in) = ADP + phosphate + 5 H(+)(out). In terms of biological role, produces ATP from ADP in the presence of a proton gradient across the membrane. The alpha chain is a regulatory subunit. This chain is ATP synthase subunit alpha, found in Clostridium botulinum (strain Loch Maree / Type A3).